The chain runs to 693 residues: Elongation factor G (693 aa).

Residues 8–282 form the tr-type G domain; the sequence is EKTRNIGIMA…AVIDYLPSPL (275 aa). GTP is bound by residues 17 to 24, 81 to 85, and 135 to 138; these read AHVDAGKT, DTPGH, and NKMD.

The protein belongs to the TRAFAC class translation factor GTPase superfamily. Classic translation factor GTPase family. EF-G/EF-2 subfamily.

Its subcellular location is the cytoplasm. Its function is as follows. Catalyzes the GTP-dependent ribosomal translocation step during translation elongation. During this step, the ribosome changes from the pre-translocational (PRE) to the post-translocational (POST) state as the newly formed A-site-bound peptidyl-tRNA and P-site-bound deacylated tRNA move to the P and E sites, respectively. Catalyzes the coordinated movement of the two tRNA molecules, the mRNA and conformational changes in the ribosome. The polypeptide is Elongation factor G (Streptococcus pneumoniae (strain ATCC 700669 / Spain 23F-1)).